The primary structure comprises 456 residues: Signal transduction histidine-protein kinase ArlS (456 aa).

A run of 2 helical transmembrane segments spans residues 13–33 (LITT…IIFF) and 157–177 (IVAL…SYIF). An HAMP domain is found at 179–232 (SQITKPIVTMSNKMNQIRRDGFQNKLELTTNYEETDNLIDTFNEMMYQIEESFN). The region spanning 240 to 456 (DASHELRTPL…TFKISFPVLN (217 aa)) is the Histidine kinase domain. The residue at position 243 (His243) is a Phosphohistidine; by autocatalysis.

In terms of processing, autophosphorylated.

It localises to the cell membrane. The catalysed reaction is ATP + protein L-histidine = ADP + protein N-phospho-L-histidine.. In terms of biological role, member of the two-component regulatory system ArlS/ArlR. ArlS probably functions as a sensor protein kinase which is autophosphorylated at a histidine residue and transfers its phosphate group to ArlR. The protein is Signal transduction histidine-protein kinase ArlS (arlS) of Staphylococcus epidermidis (strain ATCC 12228 / FDA PCI 1200).